The primary structure comprises 316 residues: tRNA(Ile)-lysidine synthase (316 aa).

33–38 (SGGTDS) contacts ATP.

It belongs to the tRNA(Ile)-lysidine synthase family.

The protein resides in the cytoplasm. The catalysed reaction is cytidine(34) in tRNA(Ile2) + L-lysine + ATP = lysidine(34) in tRNA(Ile2) + AMP + diphosphate + H(+). Functionally, ligates lysine onto the cytidine present at position 34 of the AUA codon-specific tRNA(Ile) that contains the anticodon CAU, in an ATP-dependent manner. Cytidine is converted to lysidine, thus changing the amino acid specificity of the tRNA from methionine to isoleucine. The sequence is that of tRNA(Ile)-lysidine synthase from Bdellovibrio bacteriovorus (strain ATCC 15356 / DSM 50701 / NCIMB 9529 / HD100).